A 398-amino-acid chain; its full sequence is Streptopain (398 aa).

The N-terminal stretch at 1–27 (MNKKKLGIRLLSLLALGGFVLANPVFA) is a signal peptide. Positions 28–145 (DQNFARNEKE…TTYAGTAEIK (118 aa)) are excised as a propeptide. C192 serves as the catalytic Nucleophile. Position 192 is a cysteine methyl disulfide; in zymogen form (C192). A protein contacts are provided by S282 and G339. The active-site Proton acceptor is the H340. Residues 368–390 (RLDALNPSALGTGGGAGGFNGYQ) are C-terminal active site loop.

This sequence belongs to the peptidase C10 family. As to quaternary structure, monomer. Post-translationally, the mature protease is derived from the precursor sequence by cleavage, either in cis via an autocatalytic mechanism, or in trans by mature SpeB or host proteases (trypsin, plasmin or subtilisin). Maturation can involve a number of protein cleavage intermediates. Mature SpeB probably plays the most important role in protein maturation in physiological conditions. Methylthiolation at Cys-192 of the inactive zymogen form is probably involved in the mechanism of secretion of the proteinase into the culture fluid.

It localises to the secreted. It is found in the host extracellular space. Its subcellular location is the host cytoplasm. The enzyme catalyses Preferential cleavage with hydrophobic residues at P2, P1 and P1'.. With respect to regulation, synthesized as an inactive zymogen to protect the intracellular components of the bacteria from proteolytic activity during protein production. Once secreted into the extracellular milieu, cleaved into the active protease: maturation can be mediated in cis by autocatalytic cleavage, or in trans by mature SpeB or host proteases. Protease activity is strongly inhibited by zinc and copper, which prevent its maturation into an active protease: inhibition by metal ions may be required to prevent proteolysis of streptococcal proteins. Functionally, cysteine protease that acts as a key streptococcal virulence factor by cleaving host proteins involved in immune response. Triggers inflammation by mediating cleavage of host proteins, which can both promote host pathogenesis by triggering sterile inflammation and/or restrict streptococcal infection, depending on host immune statue and infection site. Cleaves host gasdermin-A (GSDMA) in epithelial cells, promoting GSDMA activation and formation of gasdermin pores, triggering pyroptosis. Pyroptosis triggers the elimination of the infected skin cell, depriving the pathogen of its protective niche, while inducing an inflammatory response. This ultimately prevents bacterial penetration of the epithelial barrier and a subsequent systemic dissemination of the pathogen. Also mediates cleavage of the cytokine precursor interleukin-1 beta (IL1B) to its mature form, resulting in inflammation and septic shock. SpeB-mediated maturation of IL1B plays a dual role depending on infection site: while IL1B inflammatory response prevents bacterial growth during invasive skin infections, it promotes streptococcal infection of the nasopharynx by disrupting colonization resistance mediated by the microbiota. Inhibits host autophagy be catalyzing cleavage and inactivation of key autophagy factors, such as CALCOCO2, NBR1 and SQSTM1. Cleaves and inhibits a number of complement factors, such as C2, C3-beta chain of C3, C4, C5 or SERPING1, thereby promoting evasion of host immunity. May also impair adaptive immunity by catalyzing cleavage and degradation of host immunoglobulins to promote immune system evasion; the relevance of this activity is however unsure in vivo. Catalyzes maturation and release of the peptide hormone bradykinin from the precursor Kininogen-1 (KNG1) to produce hypotension during septic shock. Also involved in bacterial translocation across the host epithelial barrier by mediating cleavage and degradation of host epithelial junction proteins, such as CDH1 and OCLN. Additionally, has been involved in degradation of fibronectin and vitronectin, two host extracellular matrix proteins involved in tissue integrity. Also able to catalyze cleavage and degradation of streptococcal proteins, such as C5a peptidase, EndoS or SmeZ. Degradation of streptococcal proteins is however strictly regulated to preserve integrity of other virulence factors. This Streptococcus pyogenes serotype M3 (strain ATCC BAA-595 / MGAS315) protein is Streptopain (speB).